The following is a 780-amino-acid chain: TSC22 domain family protein 2 (780 aa).

Disordered regions lie at residues 20-86 (AQVA…TVSP), 126-158 (TSAPAPGAPGGPQLAGSSAGPVTAAPSQPPTTC), 235-499 (AHGP…PGGP), 587-607 (LVGQVDDTRRKSEPLPQPPLS), and 736-780 (LSSN…VSSA). Acidic residues predominate over residues 28-37 (EDTESLDDPD). Low complexity predominate over residues 126–146 (TSAPAPGAPGGPQLAGSSAGP). Over residues 241-262 (GTDSSLTAVSQLPPSEKMSQPT) the composition is skewed to polar residues. Composition is skewed to low complexity over residues 297-316 (GAATGPQPMMAAAQPSQPQG), 344-361 (PAVGAPAAQQPQQFAYPQ), and 395-412 (QPSSTGAAASPATAATLP). Residues 415–434 (TGQNASSVGAQLMGASSQPS) show a composition bias toward polar residues. Over residues 453–468 (QPTGVPPATVGGVVQP) the composition is skewed to low complexity. The segment covering 736–756 (LSSNDQLSQLPTQQANPGSTS) has biased composition (polar residues). Over residues 765–774 (PPQPTQPPQQ) the composition is skewed to pro residues.

Belongs to the TSC-22/Dip/Bun family. As to quaternary structure, interacts with NRBP1. Interacts with PKM isoform M2; the interaction results in reduced nuclear levels of PKM isoform M2, leading to repression of cyclin CCND1 transcription and reduced cell growth. Interacts with WDR77.

In terms of biological role, reduces the level of nuclear PKM isoform M2 which results in repression of cyclin CCND1 transcription and reduced cell growth. The sequence is that of TSC22 domain family protein 2 from Homo sapiens (Human).